A 308-amino-acid chain; its full sequence is Cilia- and flagella-associated protein 73 (308 aa).

Coiled coils occupy residues 34-143 and 175-233; these read RLLE…LEPC and AALR…WESK.

This sequence belongs to the CFAP73 family.

Its subcellular location is the cytoplasm. The protein resides in the cytoskeleton. It is found in the cilium axoneme. In terms of biological role, may play a role in ciliary/flagellar motility by regulating the assembly and the activity of axonemal inner dynein arm. This chain is Cilia- and flagella-associated protein 73, found in Homo sapiens (Human).